The primary structure comprises 222 residues: Ribonuclease 3 (222 aa).

Residues 3 to 125 (SQSVAKKLNH…LFGAIYLDAG (123 aa)) enclose the RNase III domain. Residue glutamate 38 participates in Mg(2+) binding. Residue aspartate 42 is part of the active site. Residues aspartate 111 and glutamate 114 each coordinate Mg(2+). Glutamate 114 is an active-site residue. The 71-residue stretch at 152–222 (DAKTRLQEWL…AEKALKELLA (71 aa)) folds into the DRBM domain.

Belongs to the ribonuclease III family. As to quaternary structure, homodimer. Mg(2+) is required as a cofactor.

Its subcellular location is the cytoplasm. It carries out the reaction Endonucleolytic cleavage to 5'-phosphomonoester.. In terms of biological role, digests double-stranded RNA. Involved in the processing of primary rRNA transcript to yield the immediate precursors to the large and small rRNAs (23S and 16S). Processes some mRNAs, and tRNAs when they are encoded in the rRNA operon. Processes pre-crRNA and tracrRNA of type II CRISPR loci if present in the organism. This Dechloromonas aromatica (strain RCB) protein is Ribonuclease 3.